A 143-amino-acid chain; its full sequence is Protein SLC31A2 (143 aa).

The Extracellular portion of the chain corresponds to 1-22 (MAMHFIFSDTAVLLFDFWSVHS). The helical transmembrane segment at 23–43 (PAGMALSVLVLLLLAVLYEGI) threads the bilayer. Residues 44-93 (KVGKAKLLNQVLVNLPTSISQQTIAETDGDSAGSDSFPVGRTHHRWYLCH) are Cytoplasmic-facing. Residue S77 is modified to Phosphoserine. A helical transmembrane segment spans residues 94 to 114 (FGQSLIHVIQVVIGYFIMLAV). Over 115–119 (MSYNT) the chain is Extracellular. The chain crosses the membrane as a helical span at residues 120–140 (WIFLGVVLGSAVGYYLAYPLL). The Cytoplasmic portion of the chain corresponds to 141-143 (STA).

It belongs to the copper transporter (Ctr) (TC 1.A.56) family. SLC31A subfamily. In terms of assembly, oligomer. Interacts with SLC31A1; this interaction stabilizes SLC31A2 and protects it from ubiquitination and the subsequent degradation. Ubiquitinated; ubiquitination and the subsequent proteasomal degradation are prevent by SLC31A1 that stabilizes it. As to expression, ubiquitous with high expression in placenta and heart.

It is found in the membrane. The protein localises to the cytoplasmic vesicle membrane. The protein resides in the late endosome membrane. Its subcellular location is the lysosome membrane. Does not function as a copper(1+) importer in vivo. However, in vitro functions as a low-affinity copper(1+) importer. Regulator of SLC31A1 which facilitates the cleavage of the SLC31A1 ecto-domain or which stabilizes the truncated form of SLC31A1 (Truncated CTR1 form), thereby drives the SLC31A1 truncated form-dependent endosomal copper export and modulates the copper and cisplatin accumulation via SLC31A1. This chain is Protein SLC31A2, found in Homo sapiens (Human).